We begin with the raw amino-acid sequence, 165 residues long: UBA-like domain-containing protein 2-B (165 aa).

The interval Gln119 to Arg165 is disordered.

It belongs to the UBALD family.

This Xenopus laevis (African clawed frog) protein is UBA-like domain-containing protein 2-B (ubald2-b).